The sequence spans 315 residues: MSKVKTRVYCCGGTGMDIGVNLQWHPDLVFIDTCDKNVTADHDLERVFLTEGTRGAGKNRRYMLPIIRPQVPGFLERYPAGDFNIVVFGLGGGSGSTIGPVIVSELAKAGESVAVVCMSGIEATEVLQNDIDTLKTLEGIAAATNTPVVINHIENVNGVPYTELDKEAIFNIHALINLTSQKHVRLDKLDIDNWINFTKKHNQIQPQLCQLHISNNRQEATSVPEPIAIASLFADASREVAFGTPFVRTVGISDVSDPDLLADQLHFVINSIGVASLFGSLTKQKQELEAAQVRYQQRNAIIDIDDNRTDDGFVV.

GTP is bound by residues 13–14 (GT) and 93–95 (GSG).

Belongs to the FtsZ family. PhuZ subfamily. As to quaternary structure, homomultimer. Polymerizes in a strictly GTP-dependent manner.

It is found in the host cytoplasm. The catalysed reaction is GTP + H2O = GDP + phosphate + H(+). The non-hydrolyzable GTP analog GMPCPP stabilizes filaments, which never disassemble. Its function is as follows. A tubulin-like GTPase that forms filaments, which are required for positioning viral DNA and capsids in the middle of the host cell for optimal replication. The motor component of a partition system which pushes phage DNA (encased by protein gp105) to the center of the bacterial host cell. Also required for movement of phage capsids to the vicinity of the DNA and rotation of the encased viral DNA at midcell. Forms filaments during the lytic phase, which position phage DNA at the center of the bacterial host cell. Filaments have a three-stranded intertwined architecture and form a spindle-like cytoskeleton within the infected cell. Has GTPase activity. Filaments grow at the plus end and depolymerize at the minus end, a process called treadmilling, and switch from growing in a polar manner to catastrophic depolymerization, i.e. they display dynamic instability, like tubulin. In infected host cells the filament ends close to the cell pole are relatively stable, while the other end near the phage DNA is highly dynamic. Both capsid movement and DNA rotation probably require treadmilling. The chain is Phage tubulin-like protein from Pseudomonas aeruginosa (Pseudomonas aeruginosa phage PhiPA3).